Here is a 120-residue protein sequence, read N- to C-terminus: MWGYVHLISWVAIVVLTVTALLIYSKSVKGFTMLQMINRVFYILVILSGIMMVQYSVKESWILAIFKILMGIIVIGVVEMLLSYRKQQKPTGMFLMIFIIVVVITVSLGFYLSGGYPLFN.

Helical transmembrane passes span 3 to 23 (GYVHLISWVAIVVLTVTALLI), 33 to 53 (MLQMINRVFYILVILSGIMMV), 62 to 82 (ILAIFKILMGIIVIGVVEMLL), and 92 to 112 (GMFLMIFIIVVVITVSLGFYL).

Belongs to the UPF0344 family.

It localises to the cell membrane. This is UPF0344 protein lin2366 from Listeria innocua serovar 6a (strain ATCC BAA-680 / CLIP 11262).